A 282-amino-acid polypeptide reads, in one-letter code: Kallikrein-11 (282 aa).

An N-terminal signal peptide occupies residues 1–50 (MQRLRWLRDWKSSGRGLTAAKEPGARSSPLQAMRILQLILLALATGLVGG). Residues 51-53 (ETR) constitute a propeptide, activation peptide. A Peptidase S1 domain is found at 53 to 280 (RIIKGFECKP…YVDWIQETMK (228 aa)). Intrachain disulfides connect cysteine 60/cysteine 195, cysteine 79/cysteine 95, cysteine 167/cysteine 269, cysteine 174/cysteine 241, cysteine 206/cysteine 220, and cysteine 231/cysteine 256. Histidine 94 serves as the catalytic Charge relay system. Asparagine 131 carries N-linked (GlcNAc...) asparagine glycosylation. The active-site Charge relay system is aspartate 142. N-linked (GlcNAc...) asparagine glycans are attached at residues asparagine 197 and asparagine 213. Residue serine 235 is the Charge relay system of the active site. N-linked (GlcNAc...) asparagine glycosylation occurs at asparagine 242.

It belongs to the peptidase S1 family. Kallikrein subfamily. About 40% of KLK11 is inactivated by internal cleavage after Arg-188. This proteolytic inactivation may be effected by plasminogen. As to expression, expressed in brain, skin and prostate. Isoform 1 is expressed preferentially in brain. Isoform 2 is expressed in prostate. Present in seminal plasma at concentrations ranging from 2 to 37 microg/mL (at protein level).

It is found in the secreted. It localises to the golgi apparatus. Functionally, possible multifunctional protease. Efficiently cleaves 'bz-Phe-Arg-4-methylcoumaryl-7-amide', a kallikrein substrate, and weakly cleaves other substrates for kallikrein and trypsin. Cleaves synthetic peptides after arginine but not lysine residues. In Homo sapiens (Human), this protein is Kallikrein-11 (KLK11).